The chain runs to 1141 residues: Translocase of chloroplast 125, chloroplastic (1141 aa).

2 disordered regions span residues 1–177 (MDAL…ISGY) and 325–431 (GFVE…EANE). Basic and acidic residues-rich tracts occupy residues 57-72 (RVPE…KRDG) and 107-121 (IDGR…REDL). Positions 132–150 (YDDDDDDEEEEEDGSEEGE) are enriched in acidic residues. Residues 151–167 (STSSSIINSEYSSSASN) show a composition bias toward low complexity. Acidic residues predominate over residues 328–353 (EAEEAESDVFTEGEDGYDDEDEDGDI). Composition is skewed to low complexity over residues 389–401 (RSSA…TTAT) and 408–429 (TASS…SSEA). Residues 505–734 (DFACTILVLG…KLQEASTPGK (230 aa)) enclose the AIG1-type G domain. A G1 region spans residues 514 to 521 (GKTGVGKS). 517–522 (GVGKSA) contacts GTP. S521 contributes to the Mg(2+) binding site. A G2 region spans residues 541–545 (STTKV). The interval 561–564 (DTPG) is G3. A G4 region spans residues 633–636 (THAS). GTP-binding positions include H634 and 682-683 (EN). The G5 stretch occupies residues 682-684 (ENH). Disordered regions lie at residues 758–795 (QLKM…PFRP) and 832–871 (IRRR…AVPM). A compositionally biased stretch (acidic residues) spans 770–789 (EDSDDDSDEEDEEEGDEYDD). The segment covering 832-841 (IRRRRERKKQ) has biased composition (basic residues). A helical membrane pass occupies residues 1116–1136 (MVLIGIVPILRSLINCRFGFG).

Belongs to the TRAFAC class TrmE-Era-EngA-EngB-Septin-like GTPase superfamily. AIG1/Toc34/Toc159-like paraseptin GTPase family. TOC159 subfamily. Part of the TOC core complex. Mg(2+) is required as a cofactor.

It is found in the plastid. The protein resides in the chloroplast outer membrane. GTPase involved in protein precursor import into chloroplasts. Seems to recognize chloroplast-destined precursor proteins and regulate their presentation to the translocation channel through GTP hydrolysis. Probably specialized in the import of nuclear encoded non-photosynthetic preproteins from the cytoplasm to the chloroplast. This is Translocase of chloroplast 125, chloroplastic from Physcomitrium patens (Spreading-leaved earth moss).